A 1445-amino-acid chain; its full sequence is MEEGHGLDLTYITERIIAVSFPAGCSEESYLHNLQEVTRMLKSKHGDNYLVLNLSEKRYDLTKLNPKIMDVGWPELHAPPLDKMCTICKAQESWLNSNLQHVVVIHCRGGKGRIGVVISSYMHFTNVSASADQALDRFAMKKFYDDKVSALMQPSQKRYVQFLSGLLSGSVKMNASPLFLHFVILHGTPNFDTGGVCRPFLKLYQAMQPVYTSGIYNVGPENPSRICIVIEPAQLLKGDVMVKCYHKKYRSATRDVIFRLQFHTGAVQGYGLVFGKEDLDNASKDDRFPDYGKVELVFSATPEKIQGSEHLYNDHGVIVDYNTTDPLIRWDSYENLSADGEVLHTQGPVDGSLYAKVRKKSSSDPGIPGGPQAIPATNSPDHSDHTLSVSSDSGHSTASARTDKTEERLAPGTRRGLSAQEKAELDQLLSGFGLEDPGSSLKEMTDARSKYSGTRHVVPAQVHVNGDAALKDRETDILDDEMPHHDLHSVDSLGTLSSSEGPQSAHLGPFTCHKSSQNSLLSDGFGSNVGEDPQGTLVPDLGLGMDGPYERERTFGSREPKQPQPLLRKPSVSAQMQAYGQSSYSTQTWVRQQQMVVAHQYSFAPDGEARLVSRCPADNPGLVQAQPRVPLTPTRGTSSRVAVQRGVGSGPHPPDTQQPSPSKAFKPRFPGDQVVNGAGPELSTGPSPGSPTLDIDQSIEQLNRLILELDPTFEPIPTHMNALGSQANGSVSPDSVGGGLRASSRLPDTGEGPSRATGRQGSSAEQPLGGRLRKLSLGQYDNDAGGQLPFSKCAWGKAGVDYAPNLPPFPSPADVKETMTPGYPQDLDIIDGRILSSKESMCSTPAFPVSPETPYVKTALRHPPFSPPEPPLSSPASQHKGGREPRSCPETLTHAVGMSESPIGPKSTMLRADASSTPSFQQAFASSCTISSNGPGQRRESSSSAERQWVESSPKPMVSLLGSGRPTGSPLSAEFSGTRKDSPVLSCFPPSELQAPFHSHELSLAEPPDSLAPPSSQAFLGFGTAPVGSGLPPEEDLGALLANSHGASPTPSIPLTATGAADNGFLSHNFLTVAPGHSSHHSPGLQGQGVTLPGQPPLPEKKRASEGDRSLGSVSPSSSGFSSPHSGSTISIPFPNVLPDFSKASEAASPLPDSPGDKLVIVKFVQDTSKFWYKADISREQAIAMLKDKEPGSFIVRDSHSFRGAYGLAMKVATPPPSVLQLNKKAGDLANELVRHFLIECTPKGVRLKGCSNEPYFGSLTALVCQHSITPLALPCKLLIPERDPLEEIAESSPQTAANSAAELLKQGAACNVWYLNSVEMESLTGHQAIQKALSITLVQEPPPVSTVVHFKVSAQGITLTDNQRKLFFRRHYPVNSVIFCALDPQDRKWIKDGPSSKVFGFVARKQGSATDNVCHLFAEHDPEQPASAIVNFVSKVMIGSPKKV.

The Phosphatase tensin-type domain occupies 1-170 (MEEGHGLDLT…QFLSGLLSGS (170 aa)). In terms of domain architecture, C2 tensin-type spans 175-301 (ASPLFLHFVI…GKVELVFSAT (127 aa)). Phosphothreonine is present on Thr323. Residues Ser332 and Ser361 each carry the phosphoserine modification. Residues 358–421 (RKKSSSDPGI…GTRRGLSAQE (64 aa)) are disordered. The segment covering 386-400 (TLSVSSDSGHSTASA) has biased composition (polar residues). A phosphoserine mark is found at Ser440 and Ser516. The interval 538 to 568 (VPDLGLGMDGPYERERTFGSREPKQPQPLLR) is disordered. A compositionally biased stretch (basic and acidic residues) spans 548-561 (PYERERTFGSREPK). Residue Ser571 is modified to Phosphoserine. 2 disordered regions span residues 618–695 (DNPG…TLDI) and 717–769 (PTHM…QPLG). Thr632 is modified (phosphothreonine). 4 positions are modified to phosphoserine: Ser649, Ser660, Ser687, and Ser690. The span at 723-733 (LGSQANGSVSP) shows a compositional bias: polar residues. Ser735 and Ser776 each carry phosphoserine. Tyr780 bears the Phosphotyrosine mark. Residues Ser811, Ser866, and Ser901 each carry the phosphoserine modification. Disordered regions lie at residues 859–981 (ALRH…TRKD) and 1076–1127 (GHSS…PHSG). The segment covering 864–873 (PFSPPEPPLS) has biased composition (pro residues). The segment covering 914–935 (ASSTPSFQQAFASSCTISSNGP) has biased composition (polar residues). Residues 1099-1109 (PEKKRASEGDR) show a composition bias toward basic and acidic residues. The span at 1110 to 1127 (SLGSVSPSSSGFSSPHSG) shows a compositional bias: low complexity. A phosphoserine mark is found at Ser1149 and Ser1154. An SH2 domain is found at 1172–1282 (WYKADISREQ…ALPCKLLIPE (111 aa)). A phosphoserine mark is found at Ser1293 and Ser1441. Positions 1310-1444 (ACNVWYLNSV…SKVMIGSPKK (135 aa)) constitute a PTB domain.

It belongs to the PTEN phosphatase protein family. As to quaternary structure, interacts with EGFR; EGF promotes the interaction with EGFR. Interacts with PTK2/FAK1 and BCAR1. Tyrosine phosphorylation is critical for these interactions. Interacts with Rho GTPase-activating protein DLC1 and with the regulatory p85 subunit of the PI3K kinase complex; in resting cells, interacts (via C2 tensin-type domain) with DLC1 but, following growth factor stimulation, TNS3 is phosphorylated which leads to weakened interaction with DLC1 and enhanced interaction (via C2 tensin-type domain) with p85 while DLC1 interaction with PTEN increases. Interacts (when phosphorylated on the SH2 domain) with integrins ITGB1, ITGB3 and ITGB5 and with scaffolding protein PEAK1 (phosphorylated on 'Tyr-635'); mediates the association of PEAK1 with ITGB1, ITGB3 and ITGB5. Interacts (via N-terminus) with DOCK5 (via N-terminus); the interaction increases DOCK5 guanine nucleotide exchange activity towards Rac. Interacts with receptor tyrosine kinase MET. Phosphorylated on Ser/Thr and Tyr residues. Phosphorylated on Thr-323 in the C2-type tensin domain following EGF stimulation which changes its binding preference from DLC1 to the p85 regulatory subunit of the PI3K kinase complex. EGF induces tyrosine phosphorylation in a time- and dose-dependent manner. Phosphorylation of the SH2 domain enhances interaction with PEAK1. Expressed in umbilical vein endothelial cells, epithelial cells, and fibroblasts cells (at protein level). Highly expressed in thyroid, kidney and placenta. Low expression in heart, skeletal muscle, spleen, liver, and lung. Expressed at higher levels in tonsil-derived mesenchymal stem cells (MSCs) than in adipose tissue-derived MSCs or bone marrow-derived MSCs. Expressed in tumor endothelial cells. Expression seems to be down-regulated in thyroid tumor tissues and in anaplastic carcinomas.

The protein localises to the cell junction. It is found in the focal adhesion. The protein resides in the cell projection. It localises to the podosome. In terms of biological role, may act as a protein phosphatase and/or a lipid phosphatase. Involved in the dissociation of the integrin-tensin-actin complex. EGF activates TNS4 and down-regulates TNS3 which results in capping the tail of ITGB1. Increases DOCK5 guanine nucleotide exchange activity towards Rac and plays a role in osteoclast podosome organization. Enhances RHOA activation in the presence of DLC1. Required for growth factor-induced epithelial cell migration; growth factor stimulation induces TNS3 phosphorylation which changes its binding preference from DLC1 to the p85 regulatory subunit of the PI3K kinase complex, displacing PI3K inhibitor PTEN and resulting in translocation of the TNS3-p85 complex to the leading edge of migrating cells to promote RAC1 activation. Meanwhile, PTEN switches binding preference from p85 to DLC1 and the PTEN-DLC1 complex translocates to the posterior of migrating cells to activate RHOA. Acts as an adapter protein by bridging the association of scaffolding protein PEAK1 with integrins ITGB1, ITGB3 and ITGB5 which contributes to the promotion of cell migration. Controls tonsil-derived mesenchymal stem cell proliferation and differentiation by regulating the activity of integrin ITGB1. This chain is Tensin-3 (TNS3), found in Homo sapiens (Human).